The sequence spans 20 residues: NAAVAGAVIEGATLTFEVLQ.

A plays an important role in the hemolytic activity region spans residues 3–12 (AVAGAVIEGA). The segment at 11–20 (GATLTFEVLQ) is N-terminal region.

The protein belongs to the actinoporin family. Sea anemone subfamily. Octamer or nonamer in membranes. Monomer in the soluble state.

The protein resides in the secreted. It localises to the nematocyst. Its subcellular location is the target cell membrane. Its function is as follows. Pore-forming protein that forms cations-selective hydrophilic pores of around 1 nm and causes cardiac stimulation and cytolysis. Pore formation is a multi-step process that involves specific recognition of membrane sphingomyelin (but neither cholesterol nor phosphatidylcholine) using aromatic rich region and adjacent phosphocholine (POC) binding site, firm binding to the membrane (mainly driven by hydrophobic interactions) accompanied by the transfer of the N-terminal region to the lipid-water interface and finally pore formation after oligomerization of monomers. In Actinia tenebrosa (Australian red waratah sea anemone), this protein is Cytolysin tenebrosin-A.